A 458-amino-acid polypeptide reads, in one-letter code: Homogentisate 1,2-dioxygenase (458 aa).

Catalysis depends on His308, which acts as the Proton acceptor. The Fe cation site is built by His351 and Glu357. The homogentisate site is built by Tyr366 and His387. His387 contributes to the Fe cation binding site.

Belongs to the homogentisate dioxygenase family. As to quaternary structure, hexamer; dimer of trimers. Requires Fe cation as cofactor.

The catalysed reaction is homogentisate + O2 = 4-maleylacetoacetate + H(+). It participates in amino-acid degradation; L-phenylalanine degradation; acetoacetate and fumarate from L-phenylalanine: step 4/6. Functionally, involved in the catabolism of homogentisate (2,5-dihydroxyphenylacetate or 2,5-OH-PhAc), a central intermediate in the degradation of phenylalanine and tyrosine. Catalyzes the oxidative ring cleavage of the aromatic ring of homogentisate to yield maleylacetoacetate. The protein is Homogentisate 1,2-dioxygenase of Xanthomonas axonopodis pv. citri (strain 306).